The sequence spans 526 residues: Delayed-rectifier potassium channel regulatory subunit KCNS1 (526 aa).

At 1-217 (MLMLLVRGTH…LTMENPGYSL (217 aa)) the chain is on the cytoplasmic side. A helical membrane pass occupies residues 218–239 (PSKLFSCVSISVVLASIAAMCI). Topologically, residues 240-270 (HSLPEYQAREAAAAVAAVAAGRSPEGVRDDP) are extracellular. Residues 271-293 (VLRRLEYFCIAWFSFEVSSRLLL) traverse the membrane as a helical segment. The Cytoplasmic portion of the chain corresponds to 294–304 (APSTRNFFCHP). A helical membrane pass occupies residues 305–322 (LNLIDIVSVLPFYLTLLA). Residues 323–337 (GVALGDQGGKEFGHL) lie on the Extracellular side of the membrane. The chain crosses the membrane as a helical; Voltage-sensor span at residues 338–358 (GKVVQVFRLMRIFRVLKLARH). Residues 359-373 (STGLRSLGATLKHSY) are Cytoplasmic-facing. The helical transmembrane segment at 374–395 (REVGILLLYLAVGVSVFSGVAY) threads the bilayer. Residues 396–408 (TAEKEEDVGFNTI) lie on the Extracellular side of the membrane. Residues 409 to 420 (PACWWWGTVSMT) constitute an intramembrane region (helical). The Selectivity filter motif lies at 421-426 (TVGYGD). An intramembrane segment occupies 421–428 (TVGYGDVV). The Extracellular portion of the chain corresponds to 429–435 (PVTVAGK). A helical transmembrane segment spans residues 436-464 (LAASGCILGGILVVALPITIIFNKFSHFY). At 465–526 (RRQKALEAAV…PSEPPHPQRY (62 aa)) the chain is on the cytoplasmic side. Residues 492 to 526 (VSEASLETSGETSQEGRSADLESQAPSEPPHPQRY) form a disordered region. The segment covering 496–507 (SLETSGETSQEG) has biased composition (polar residues).

This sequence belongs to the potassium channel family. S (TC 1.A.1.2) subfamily. Kv9.1/KCNS1 sub-subfamily. In terms of assembly, heterotetramer with KCNB1. Heterotetramer with KCNB2. Does not form homomultimers.

The protein localises to the cell membrane. Potassium channel regulatory subunit that modulate the delayed rectifier voltage-gated potassium channel activity of KCNB1 and KCNB2 by altering their kinetics, expression levels, and shifting the half-inactivation potential to more polarized values. While it does not form functional channels on its own, it can form functional heterotetrameric channels with KCNB1 and KCNB2. Each regulatory subunit has unique regulatory properties that can lead to extensive inhibition, significant changes in kinetics, and/or substantial shifts in the voltage dependencies of the inactivation process. In Gorilla gorilla gorilla (Western lowland gorilla), this protein is Delayed-rectifier potassium channel regulatory subunit KCNS1.